A 2184-amino-acid chain; its full sequence is Chromodomain-helicase-DNA-binding protein 8 (2184 aa).

2 disordered regions span residues 379-399 (VKTS…KQEK) and 419-527 (IPRV…KRKK). The span at 387–399 (ESRKLDSQKKQEK) shows a compositional bias: basic and acidic residues. Acidic residues predominate over residues 425–437 (EDELPSVNPEDDD). Positions 448–459 (GETSDRSKDEKP) are enriched in basic and acidic residues. Positions 516–527 (KRRSNRQVKRKK) are enriched in basic residues. 2 Chromo domains span residues 586–653 (AIVD…TQMQ) and 668–734 (VEVD…RVAR). A Helicase ATP-binding domain is found at 767–941 (LFNWYNRQNC…FSLLHFLEPT (175 aa)). 780-787 (DEMGLGKT) provides a ligand contact to ATP. A DEAH box motif is present at residues 892 to 895 (DEAH). The Helicase C-terminal domain maps to 1081-1252 (LIDKLLPKLR…FTKKEIEDLL (172 aa)). Disordered regions lie at residues 1907 to 1989 (GISG…EESR) and 2039 to 2076 (WSSP…PAPD). Composition is skewed to low complexity over residues 1912-1961 (SRPS…SNSE) and 2040-2054 (SSPR…DSPD).

It belongs to the SNF2/RAD54 helicase family. CHD8 subfamily. In terms of assembly, component of some MLL1/MLL complex.

It is found in the nucleus. The enzyme catalyses ATP + H2O = ADP + phosphate + H(+). Its function is as follows. ATP-dependent chromatin-remodeling factor, it slides nucleosomes along DNA; nucleosome sliding requires ATP. Acts as a transcription repressor by remodeling chromatin structure and recruiting histone H1 to target genes. Suppresses p53/tp53-mediated apoptosis by recruiting histone H1 and preventing p53/tp53 transactivation activity. Acts as a negative regulator of Wnt signaling pathway by regulating beta-catenin (ctnnb1) activity. Negatively regulates ctnnb1-targeted gene expression by being recruited specifically to the promoter regions of several ctnnb1 responsive genes. May also act as a transcription activator by participating in efficient U6 RNA polymerase III transcription. This chain is Chromodomain-helicase-DNA-binding protein 8, found in Xenopus tropicalis (Western clawed frog).